Reading from the N-terminus, the 260-residue chain is Uroplakin-1b (260 aa).

Residues 1 to 15 (MAKDNSTVRCFQGLL) are Cytoplasmic-facing. A helical membrane pass occupies residues 16 to 36 (IFGNVIIGCCGIALTAECIFF). The Extracellular segment spans residues 37–60 (VSDQHSLYPLLEATDNDDIYGAAW). Residues 61–81 (IGIFVGICLFCLSVLGIVGIM) traverse the membrane as a helical segment. Residues 82–86 (KSSRK) lie on the Cytoplasmic side of the membrane. Residues 87-107 (ILLAYFILMFIVYAFEVASCI) traverse the membrane as a helical segment. Residues 108–229 (TAATQQDFFT…ELISGPMNRH (122 aa)) lie on the Extracellular side of the membrane. The chain crosses the membrane as a helical span at residues 230-250 (AWGVAWFGFAILCWTFWVLLG). At 251-260 (TMFYWSRIEY) the chain is on the cytoplasmic side.

The protein belongs to the tetraspanin (TM4SF) family. As to quaternary structure, heterodimer with uroplakin-3A (UPK3A) or uroplakin-3B (UPK3B). N-glycosylated with high-mannose oligosaccharides. In terms of tissue distribution, bladder epithelium.

It localises to the membrane. Its function is as follows. Component of the asymmetric unit membrane (AUM); a highly specialized biomembrane elaborated by terminally differentiated urothelial cells. May play an important role in normal bladder epithelial physiology, possibly in regulating membrane permeability of superficial umbrella cells or in stabilizing the apical membrane through AUM/cytoskeletal interactions. This Homo sapiens (Human) protein is Uroplakin-1b (UPK1B).